The primary structure comprises 64 residues: Ferredoxin-2 (64 aa).

The 4Fe-4S ferredoxin-type domain occupies 2 to 29 (RIHVDQDKCCGAGSCVLAAPDVFDQREE). Residues Cys10, Cys16, and Cys55 each contribute to the [3Fe-4S] cluster site.

[3Fe-4S] cluster serves as cofactor.

In terms of biological role, electron transport protein for the cytochrome P-450-SU2 system. This Streptomyces griseolus protein is Ferredoxin-2 (subB).